A 394-amino-acid chain; its full sequence is Protein TsgA homolog (394 aa).

12 helical membrane-spanning segments follow: residues 11–31, 51–71, 76–96, 101–121, 134–154, 162–182, 206–226, 246–266, 274–294, 302–322, 334–354, and 363–383; these read WISY…GIVM, FLNA…EIIP, LVFG…GHNL, ISMF…TFLV, LLFT…AAAM, WYWV…LTLC, VGVL…LGFI, QLVS…SFIL, IVTV…STDN, ILAL…LGSL, FILT…GPIV, and LATA…LGFF.

It belongs to the major facilitator superfamily. TsgA family.

Its subcellular location is the cell inner membrane. This is Protein TsgA homolog from Yersinia pseudotuberculosis serotype O:1b (strain IP 31758).